The following is a 291-amino-acid chain: NAD kinase (291 aa).

The active-site Proton acceptor is the D73. Residues 73–74 (DG), 147–148 (ND), R175, D177, 188–193 (TAYALS), A212, and Q246 contribute to the NAD(+) site.

This sequence belongs to the NAD kinase family. A divalent metal cation serves as cofactor.

Its subcellular location is the cytoplasm. It catalyses the reaction NAD(+) + ATP = ADP + NADP(+) + H(+). Functionally, involved in the regulation of the intracellular balance of NAD and NADP, and is a key enzyme in the biosynthesis of NADP. Catalyzes specifically the phosphorylation on 2'-hydroxyl of the adenosine moiety of NAD to yield NADP. This Polaromonas naphthalenivorans (strain CJ2) protein is NAD kinase.